The following is an 889-amino-acid chain: Phosphofurin acidic cluster sorting protein 2 (889 aa).

Disordered regions lie at residues 180–246 (DHED…TSMT), 293–463 (LDME…PDAR), and 687–740 (SSAT…SQGV). Positions 343–358 (SHKEPPSPADVPEKTR) are enriched in basic and acidic residues. 5 positions are modified to phosphoserine: S390, S416, S453, S691, and S694. Composition is skewed to low complexity over residues 687–720 (SSATSGDSDDAAPSGSGTLSSTPPSASPAAKEAS) and 727–737 (PSVSGGLSSPS).

This sequence belongs to the PACS family. Interacts with BID and PKD2. Interacts with SIRT1. Interacts with HDAC1. Interacts with TRPV1. Interacts with WDR37. In terms of assembly, (Microbial infection) Interacts with HIV-1 Nef. In terms of tissue distribution, broadly expressed, with greatest levels in skeletal muscle followed by heart, brain, pancreas and testis.

The protein localises to the endoplasmic reticulum. Its subcellular location is the mitochondrion. In terms of biological role, multifunctional sorting protein that controls the endoplasmic reticulum (ER)-mitochondria communication, including the apposition of mitochondria with the ER and ER homeostasis. In addition, in response to apoptotic inducer, translocates BIB to mitochondria, which initiates a sequence of events including the formation of mitochondrial truncated BID, the release of cytochrome c, the activation of caspase-3 thereby causing cell death. May also be involved in ion channel trafficking, directing acidic cluster-containing ion channels to distinct subcellular compartments. The chain is Phosphofurin acidic cluster sorting protein 2 from Homo sapiens (Human).